We begin with the raw amino-acid sequence, 264 residues long: Diphthine synthase (264 aa).

Residues Leu10, Asp87, Val90, 115-116 (SI), Leu166, Ala209, and His234 each bind S-adenosyl-L-methionine.

This sequence belongs to the diphthine synthase family. In terms of assembly, homodimer.

The catalysed reaction is 2-[(3S)-amino-3-carboxypropyl]-L-histidyl-[translation elongation factor 2] + 3 S-adenosyl-L-methionine = diphthine-[translation elongation factor 2] + 3 S-adenosyl-L-homocysteine + 3 H(+). It participates in protein modification; peptidyl-diphthamide biosynthesis. In terms of biological role, S-adenosyl-L-methionine-dependent methyltransferase that catalyzes the trimethylation of the amino group of the modified target histidine residue in translation elongation factor 2 (EF-2), to form an intermediate called diphthine. The three successive methylation reactions represent the second step of diphthamide biosynthesis. This is Diphthine synthase from Thermococcus gammatolerans (strain DSM 15229 / JCM 11827 / EJ3).